Here is a 282-residue protein sequence, read N- to C-terminus: 4-hydroxybenzoate octaprenyltransferase (282 aa).

9 helical membrane passes run 17–37 (IGIL…NQGF), 40–60 (IDLL…GCVI), 90–110 (AFIL…KLPI), 113–133 (FYFA…KRFL), 135–155 (APQL…FIAS), 163–183 (FVVL…MYAM), 207–227 (LIIA…AINK), 231–251 (WFFY…LKLI), and 262–282 (AFLV…LALI).

The protein belongs to the UbiA prenyltransferase family. The cofactor is Mg(2+).

It localises to the cell inner membrane. The enzyme catalyses all-trans-octaprenyl diphosphate + 4-hydroxybenzoate = 4-hydroxy-3-(all-trans-octaprenyl)benzoate + diphosphate. The protein operates within cofactor biosynthesis; ubiquinone biosynthesis. Functionally, catalyzes the prenylation of para-hydroxybenzoate (PHB) with an all-trans polyprenyl group. Mediates the second step in the final reaction sequence of ubiquinone-8 (UQ-8) biosynthesis, which is the condensation of the polyisoprenoid side chain with PHB, generating the first membrane-bound Q intermediate 3-octaprenyl-4-hydroxybenzoate. This Legionella pneumophila (strain Paris) protein is 4-hydroxybenzoate octaprenyltransferase.